Here is a 608-residue protein sequence, read N- to C-terminus: Albumin (608 aa).

A signal peptide spans Met-1–Ser-18. Residues Arg-19–Arg-24 constitute a propeptide that is removed on maturation. 3 Albumin domains span residues Arg-19 to Arg-210, Glu-211 to Pro-403, and Leu-404 to Ala-601. Residue His-27 participates in Cu cation binding. At Ser-29 the chain carries Phosphoserine. Glu-30 and Asp-37 together coordinate Ca(2+). A disulfide bridge connects residues Cys-77 and Cys-86. 2 positions are modified to phosphoserine: Ser-82 and Ser-89. His-91 lines the Zn(2+) pocket. 6 disulfide bridges follow: Cys-99/Cys-115, Cys-114/Cys-125, Cys-148/Cys-193, Cys-192/Cys-201, Cys-224/Cys-270, and Cys-269/Cys-277. Lys-229 is subject to N6-succinyllysine. Glu-268 contributes to the Ca(2+) binding site. The Zn(2+) site is built by His-271 and Asp-273. Ca(2+)-binding residues include Asp-273, Glu-276, Asp-279, and Asp-283. Cystine bridges form between Cys-289–Cys-303, Cys-302–Cys-313, Cys-340–Cys-385, Cys-384–Cys-393, Cys-416–Cys-462, Cys-461–Cys-472, Cys-485–Cys-501, and Cys-500–Cys-511. The residue at position 443 (Ser-443) is a Phosphoserine. A phosphothreonine mark is found at Thr-444 and Thr-446. Lys-460 carries the N6-succinyllysine modification. Ser-513 bears the Phosphoserine mark. 2 cysteine pairs are disulfide-bonded: Cys-538-Cys-583 and Cys-582-Cys-591. At Lys-558 the chain carries N6-methyllysine. At Thr-570 the chain carries Phosphothreonine. Lys-588 is modified (N6-succinyllysine).

The protein belongs to the ALB/AFP/VDB family. Interacts with FCGRT; this interaction regulates ALB homeostasis. Interacts with TASOR. In plasma, occurs in a covalently-linked complex with chromophore-bound alpha-1-microglobulin; this interaction does not prevent fatty acid binding to ALB. In terms of processing, phosphorylated by FAM20C in the extracellular medium. In terms of tissue distribution, plasma.

It localises to the secreted. Its function is as follows. Binds water, Ca(2+), Na(+), K(+), fatty acids, hormones, bilirubin and drugs. Its main function is the regulation of the colloidal osmotic pressure of blood. Major zinc transporter in plasma, typically binds about 80% of all plasma zinc. Major calcium and magnesium transporter in plasma, binds approximately 45% of circulating calcium and magnesium in plasma. Potentially has more than two calcium-binding sites and might additionally bind calcium in a non-specific manner. The shared binding site between zinc and calcium at residue Asp-273 suggests a crosstalk between zinc and calcium transport in the blood. The rank order of affinity is zinc &gt; calcium &gt; magnesium. Binds to the bacterial siderophore enterobactin and inhibits enterobactin-mediated iron uptake of E.coli from ferric transferrin, and may thereby limit the utilization of iron and growth of enteric bacteria such as E.coli. Does not prevent iron uptake by the bacterial siderophore aerobactin. The chain is Albumin (ALB) from Felis catus (Cat).